The sequence spans 232 residues: Ornithine carbamoyltransferase (232 aa).

Residues Gln15, Arg39, and 66 to 69 (HPTQ) each bind carbamoyl phosphate. L-ornithine contacts are provided by residues Asn99, Asp163, and 167–168 (SM). Carbamoyl phosphate-binding positions include 204–207 (HCLP) and Thr232.

Belongs to the aspartate/ornithine carbamoyltransferase superfamily. OTCase family.

The protein resides in the cytoplasm. It carries out the reaction carbamoyl phosphate + L-ornithine = L-citrulline + phosphate + H(+). It participates in amino-acid biosynthesis; L-arginine biosynthesis; L-arginine from L-ornithine and carbamoyl phosphate: step 1/3. Functionally, reversibly catalyzes the transfer of the carbamoyl group from carbamoyl phosphate (CP) to the N(epsilon) atom of ornithine (ORN) to produce L-citrulline. In Neisseria perflava, this protein is Ornithine carbamoyltransferase (argF).